The chain runs to 30 residues: Alpha-conotoxin EIVA (30 aa).

3 disulfides stabilise this stretch: Cys2–Cys16, Cys3–Cys11, and Cys14–Cys24. Residues Pro7, Pro13, Pro21, Pro22, and Pro27 each carry the 4-hydroxyproline modification. Residue Gly30 is modified to Glycine amide.

In terms of tissue distribution, expressed by the venom duct.

The protein resides in the secreted. Its function is as follows. Alpha-conotoxins act on postsynaptic membranes, they bind to the nicotinic acetylcholine receptors (nAChR) and thus inhibit them. This toxin binds with high affinity to both fetal (alpha-1-beta-1-epsilon-delta (CHRNA1-CHRNB1-CHRND-CHRNE) subunits) and adult (alpha-1/beta-1/gamma/delta subunits) mammalian muscle nicotinic acetylcholine receptors (nAChR). The chain is Alpha-conotoxin EIVA from Conus ermineus (Agate cone).